The following is a 1003-amino-acid chain: X-linked retinitis pigmentosa GTPase regulator (1003 aa).

RCC1 repeat units follow at residues 54 to 105 (NKLY…STEG), 106 to 158 (GKVY…LTED), 159 to 208 (GELF…VTTE), 209 to 261 (GQLY…LTEK), 262 to 313 (AVYT…ITDM), and 314 to 367 (GLMY…FATP). Position 418 is a phosphoserine (serine 418). The disordered stretch occupies residues 460–495 (TPEKEGLTQPEPDYFRDNMAKGKETDNSSATDSESL). Residues 472–485 (DYFRDNMAKGKETD) show a composition bias toward basic and acidic residues. Residues 486–495 (NSSATDSESL) show a composition bias toward polar residues. The residue at position 520 (serine 520) is a Phosphoserine. Disordered stretches follow at residues 625-657 (FKAI…LAEM), 691-760 (ESKD…TDQN), 794-932 (LSEI…DVKK), and 968-1003 (AFKG…CTIL). Basic and acidic residues predominate over residues 693–715 (KDFVKDSRRNKQDVIFDSERESI). Acidic residues-rich tracts occupy residues 716 to 726 (EEPDSYLEGES) and 797 to 821 (IPEE…EANE). Basic and acidic residues predominate over residues 827–848 (AGKEEKEIEILSDDLTDRAEDH). Residues 849–867 (EFSEDEEPEDMAEELDEDL) are compositionally biased toward acidic residues. Residues 882–896 (SLKKDETTKQEKRAI) are compositionally biased toward basic and acidic residues. Low complexity predominate over residues 913-924 (SSSSEVLNDSES). Positions 978–989 (QNHMGQNHQDTS) are enriched in polar residues. Cysteine 1000 bears the Cysteine methyl ester mark. Residue cysteine 1000 is the site of S-geranylgeranyl cysteine attachment. Positions 1001–1003 (TIL) are cleaved as a propeptide — removed in mature form.

In terms of assembly, interacts with PDE6D. Interacts with RPGRIP1. Interacts with RPGRIP1L. PDE6D, RPGRIP1 and RPGRIP1L may compete for the same binding sites. Interacts with NPM1. Interacts with SMC1A and SMC3. Interacts with CEP290. Interacts with WHRN. Interacts with SPATA7. Interacts with RAB37 and RAB8A (in GDP-bound forms); functions as GEF for RAB37 and RAB8A. Post-translationally, prenylated. In terms of tissue distribution, isoform 1 is expressed exclusively in testis. Isoforms 2, 3 and 4 are widely expressed.

It localises to the golgi apparatus. Its subcellular location is the cell projection. It is found in the cilium. The protein resides in the cytoplasm. The protein localises to the cytoskeleton. It localises to the cilium basal body. Its subcellular location is the microtubule organizing center. It is found in the centrosome. The protein resides in the cilium axoneme. The protein localises to the flagellum axoneme. Functionally, acts as a guanine-nucleotide releasing factor (GEF) for RAB8A and RAB37 by promoting the conversion of inactive RAB-GDP to the active form RAB-GTP. GEF activity towards RAB8A may facilitate ciliary trafficking by modulating ciliary intracellular localization of RAB8A. GEF activity towards RAB37 maintains autophagic homeostasis and retinal function. Involved in photoreceptor integrity. May control cilia formation by regulating actin stress filaments and cell contractility. May be involved in microtubule organization and regulation of transport in primary cilia. May play a critical role in spermatogenesis and in intraflagellar transport processes. The protein is X-linked retinitis pigmentosa GTPase regulator (RPGR) of Canis lupus familiaris (Dog).